Reading from the N-terminus, the 86-residue chain is Putative membrane protein insertion efficiency factor (86 aa).

It belongs to the UPF0161 family.

Its subcellular location is the cell inner membrane. Its function is as follows. Could be involved in insertion of integral membrane proteins into the membrane. This Mannheimia succiniciproducens (strain KCTC 0769BP / MBEL55E) protein is Putative membrane protein insertion efficiency factor.